Consider the following 239-residue polypeptide: Norbelladine 4'-O-methyltransferase 5 (239 aa).

Residues V55, E77, 79–80 (GV), S85, D103, and A132 contribute to the S-adenosyl-L-methionine site. An a divalent metal cation-binding site is contributed by D155. An S-adenosyl-L-methionine-binding site is contributed by D157. D181 and N182 together coordinate a divalent metal cation.

This sequence belongs to the class I-like SAM-binding methyltransferase superfamily. Cation-dependent O-methyltransferase family. Mg(2+) serves as cofactor.

It catalyses the reaction norbelladine + S-adenosyl-L-methionine = 4'-O-methylnorbelladine + S-adenosyl-L-homocysteine + H(+). It functions in the pathway alkaloid biosynthesis. 4'-O-methyltransferase converting norbelladine to 4'-O-methylnorbelladine. 4'-O-methylnorbelladine is a precursor to all Amaryllidaceae alkaloids such as galanthamine, lycorine and haemanthamine, and including haemanthamine- and crinamine-type alkaloids, promising anticancer agents. The sequence is that of Norbelladine 4'-O-methyltransferase 5 from Narcissus aff. pseudonarcissus MK-2014 (Daffodil).